We begin with the raw amino-acid sequence, 367 residues long: Glutamate 5-kinase (367 aa).

Lys9 contributes to the ATP binding site. Ser49, Asp136, and Asn148 together coordinate substrate. Residues 168–169 (TD) and 210–216 (TGGMKSK) contribute to the ATP site. Residues 276–350 (SGQIEVDAGA…GMQSQDIQVR (75 aa)) enclose the PUA domain.

It belongs to the glutamate 5-kinase family.

Its subcellular location is the cytoplasm. The enzyme catalyses L-glutamate + ATP = L-glutamyl 5-phosphate + ADP. Its pathway is amino-acid biosynthesis; L-proline biosynthesis; L-glutamate 5-semialdehyde from L-glutamate: step 1/2. Its function is as follows. Catalyzes the transfer of a phosphate group to glutamate to form L-glutamate 5-phosphate. The chain is Glutamate 5-kinase from Bacillus cereus (strain G9842).